Consider the following 201-residue polypeptide: 3-isopropylmalate dehydratase small subunit (201 aa).

It belongs to the LeuD family. LeuD type 1 subfamily. Heterodimer of LeuC and LeuD.

It catalyses the reaction (2R,3S)-3-isopropylmalate = (2S)-2-isopropylmalate. Its pathway is amino-acid biosynthesis; L-leucine biosynthesis; L-leucine from 3-methyl-2-oxobutanoate: step 2/4. Functionally, catalyzes the isomerization between 2-isopropylmalate and 3-isopropylmalate, via the formation of 2-isopropylmaleate. The polypeptide is 3-isopropylmalate dehydratase small subunit (Brucella abortus (strain S19)).